Here is a 254-residue protein sequence, read N- to C-terminus: PAXIP1-associated glutamate-rich protein 1 (254 aa).

Disordered regions lie at residues 1–111 (MSLA…PPSE) and 127–254 (LQAE…QRKY). The span at 45 to 62 (KAEDEGEGGREETEREGS) shows a compositional bias: basic and acidic residues. The span at 78–98 (EPAEEDSEDWCVPCSDEEVEL) shows a compositional bias: acidic residues. The segment at 116–160 (YELLAAHGTLELQAEILPRRPPTPEAQSEEERSDEEPEAKEEEEE) is sufficient for interaction with NCOA1. Residue T138 is modified to Phosphothreonine. The segment covering 142 to 159 (QSEEERSDEEPEAKEEEE) has biased composition (acidic residues). Residues S143 and S148 each carry the phosphoserine modification. Residues 161-254 (KPHMPTEFDF…SSLFPRQRKY (94 aa)) form a sufficient for interaction with ESR1 region. Residues 195-223 (QKREARLDKVLSDMKRHKKLEEQILRTGR) show a composition bias toward basic and acidic residues. S237 carries the post-translational modification Phosphoserine.

In terms of assembly, component of the KMT2 family MLL2/MLL3 complex (also named ASCOM complex), at least composed of the HMTs KMT2D and/or KMT2C, the common subunits ASH2L, RBBP5, WDR5 and DPY30, and the complex type-specific subunits PAXIP1/PTIP, PAGR1, NCOA6 and KDM6A; PAXIP1 is required for the association with the MLL2/MLL3 complex. Forms a constitutive complex with PAXIP1/PTIP independently of the MLL2/MLL3 complex. Interacts with NCOA1, ESR1, NR3C1, AR. In terms of tissue distribution, ubiquitously expressed.

Its subcellular location is the nucleus. Its association with the histone methyltransferase MLL2/MLL3 complex is suggesting a role in epigenetic transcriptional activation. However, in association with PAXIP1/PTIP is proposed to function at least in part independently of the MLL2/MLL3 complex. Proposed to be recruited by PAXIP1 to sites of DNA damage where the PAGR1:PAXIP1 complex is required for cell survival in response to DNA damage independently of the MLL2/MLL3 complex. However, its function in DNA damage has been questioned. During immunoglobulin class switching in activated B-cells is involved in transcription regulation of downstream switch regions at the immunoglobulin heavy-chain (Igh) locus independently of the MLL2/MLL3 complex. Involved in both estrogen receptor-regulated gene transcription and estrogen-stimulated G1/S cell-cycle transition. Acts as a transcriptional cofactor for nuclear hormone receptors. Inhibits the induction properties of several steroid receptors such as NR3C1, AR and PPARG; the mechanism of inhibition appears to be gene-dependent. This Homo sapiens (Human) protein is PAXIP1-associated glutamate-rich protein 1 (PAGR1).